Reading from the N-terminus, the 469-residue chain is Alpha-galactosidase (469 aa).

Residues 1–17 form the signal peptide; the sequence is MFPFFFALFFSSTDVLA. A disulfide bond links Cys41 and Cys73. Positions 71 and 72 each coordinate substrate. A glycan (N-linked (GlcNAc...) asparagine) is linked at Asn81. A disulfide bond links Cys120 and Cys150. Lys146 contacts substrate. The active-site Nucleophile is Asp148. Asn174 carries an N-linked (GlcNAc...) asparagine glycan. Position 204 (Arg204) interacts with substrate. Asp208 (proton donor) is an active-site residue. Disulfide bonds link Cys220–Cys236 and Cys222–Cys229. Position 250 (Gln250) interacts with substrate. Residues Asn269, Asn369, Asn402, Asn412, Asn421, Asn426, and Asn434 are each glycosylated (N-linked (GlcNAc...) asparagine).

It belongs to the glycosyl hydrolase 27 family. In terms of assembly, homotetramer.

The protein localises to the secreted. The enzyme catalyses Hydrolysis of terminal, non-reducing alpha-D-galactose residues in alpha-D-galactosides, including galactose oligosaccharides, galactomannans and galactolipids.. This chain is Alpha-galactosidase (MEL), found in Lachancea cidri (Yeast).